The sequence spans 317 residues: Neurogenic differentiation factor 6-B (317 aa).

Disordered stretches follow at residues 1-90 (MLTV…ERSR) and 297-317 (DLHP…GYHN). A compositionally biased stretch (acidic residues) spans 37-56 (EAEDDNTDREEEEEREEDEN). The span at 59 to 69 (PKKKGPRKKKS) shows a compositional bias: basic residues. Residues 65–70 (RKKKSE) carry the Nuclear localization signal motif. The segment covering 70–90 (EGRGDRVKMRRQEANARERSR) has biased composition (basic and acidic residues). The bHLH domain maps to 78 to 130 (MRRQEANARERSRMHGLNDALESLRKVVPCYSKTQKLSKIETLRLAKNYIWAL). The segment covering 301 to 317 (RSQSFQSQDELNTGYHN) has biased composition (polar residues).

As to quaternary structure, efficient DNA binding requires dimerization with another bHLH protein. Embryonic olfactory bulbs and olfactory placodes. In adult, expressed in brain and eye.

Its subcellular location is the nucleus. Differentiation factor required for neurogenesis. Does not act as an upstream activator of isl1. The chain is Neurogenic differentiation factor 6-B from Danio rerio (Zebrafish).